The chain runs to 185 residues: Elongation factor P (185 aa).

This sequence belongs to the elongation factor P family.

It is found in the cytoplasm. It functions in the pathway protein biosynthesis; polypeptide chain elongation. In terms of biological role, involved in peptide bond synthesis. Stimulates efficient translation and peptide-bond synthesis on native or reconstituted 70S ribosomes in vitro. Probably functions indirectly by altering the affinity of the ribosome for aminoacyl-tRNA, thus increasing their reactivity as acceptors for peptidyl transferase. This chain is Elongation factor P, found in Finegoldia magna (strain ATCC 29328 / DSM 20472 / WAL 2508) (Peptostreptococcus magnus).